The primary structure comprises 499 residues: Increased recombination centers protein 15 (499 aa).

47–56 (DQRASLGGAY) lines the FAD pocket.

This sequence belongs to the class-I pyridine nucleotide-disulfide oxidoreductase family.

The protein localises to the cytoplasm. This is Increased recombination centers protein 15 (IRC15) from Saccharomyces cerevisiae (strain ATCC 204508 / S288c) (Baker's yeast).